The primary structure comprises 196 residues: MARSFYSHIREAWKTPKEGKLAELQWQRQQEWRDQGAIERIERPTRLDKARSLGYKAKQGVVVARVSVRKGTARKQRFKAGRRSKRQGVNKITRRKNLQRIAEERSGRKFRNLRVLNSYWVGEDGSQKWFEVILLDPEHGAIQNDDDLSWICDDSQRGRAYRGRTSAGQRGRGQQKRGKGTEHTRPSIRANDKRGK.

The interval 159-196 (RAYRGRTSAGQRGRGQQKRGKGTEHTRPSIRANDKRGK) is disordered. Basic and acidic residues predominate over residues 179-196 (KGTEHTRPSIRANDKRGK).

Belongs to the eukaryotic ribosomal protein eL15 family.

This Natronomonas pharaonis (strain ATCC 35678 / DSM 2160 / CIP 103997 / JCM 8858 / NBRC 14720 / NCIMB 2260 / Gabara) (Halobacterium pharaonis) protein is Large ribosomal subunit protein eL15.